The primary structure comprises 344 residues: Arginine N-succinyltransferase (344 aa).

Position 125 (Leu-125) interacts with succinyl-CoA. Residue His-229 is the Proton donor of the active site.

Belongs to the arginine N-succinyltransferase family.

The enzyme catalyses succinyl-CoA + L-arginine = N(2)-succinyl-L-arginine + CoA + H(+). The protein operates within amino-acid degradation; L-arginine degradation via AST pathway; L-glutamate and succinate from L-arginine: step 1/5. Functionally, catalyzes the transfer of succinyl-CoA to arginine to produce N(2)-succinylarginine. The polypeptide is Arginine N-succinyltransferase (Escherichia coli O6:H1 (strain CFT073 / ATCC 700928 / UPEC)).